Consider the following 188-residue polypeptide: NADH-quinone oxidoreductase subunit B 1 (188 aa).

[4Fe-4S] cluster contacts are provided by cysteine 39, cysteine 40, cysteine 105, and cysteine 134.

Belongs to the complex I 20 kDa subunit family. As to quaternary structure, NDH-1 is composed of 14 different subunits. Subunits NuoB, C, D, E, F, and G constitute the peripheral sector of the complex. The cofactor is [4Fe-4S] cluster.

The protein localises to the cell inner membrane. The catalysed reaction is a quinone + NADH + 5 H(+)(in) = a quinol + NAD(+) + 4 H(+)(out). Its function is as follows. NDH-1 shuttles electrons from NADH, via FMN and iron-sulfur (Fe-S) centers, to quinones in the respiratory chain. The immediate electron acceptor for the enzyme in this species is believed to be ubiquinone. Couples the redox reaction to proton translocation (for every two electrons transferred, four hydrogen ions are translocated across the cytoplasmic membrane), and thus conserves the redox energy in a proton gradient. In Solibacter usitatus (strain Ellin6076), this protein is NADH-quinone oxidoreductase subunit B 1.